Reading from the N-terminus, the 378-residue chain is E3 ubiquitin-protein ligase ATL9 (378 aa).

Positions 1-33 are cleaved as a signal peptide; that stretch reads MAILDTKSSRWIPHNLLFLLLLLLLQSVPYGFG. Residues 51–71 traverse the membrane as a helical segment; it reads VVVVITVLFLVIFFMVFGSIF. An RING-type; atypical zinc finger spans residues 135–177; sequence CAVCLCEFEDDETLRLMPPCCHVFHADCVDVWLSEHSTCPLCR. Disordered regions lie at residues 187–211, 300–326, and 350–378; these read DDDDSTESYSGTDPGTISSSTDPER, ARSSRSGYRSGSVGSERSAFPYGRKSN, and FSGDAPKNLPTSIEAGERSFERLRPDERV. Positions 193-207 are enriched in polar residues; it reads ESYSGTDPGTISSST. Positions 301 to 317 are enriched in low complexity; the sequence is RSSRSGYRSGSVGSERS. Positions 364–378 are enriched in basic and acidic residues; sequence AGERSFERLRPDERV.

The protein belongs to the RING-type zinc finger family. ATL subfamily.

The protein resides in the membrane. The enzyme catalyses S-ubiquitinyl-[E2 ubiquitin-conjugating enzyme]-L-cysteine + [acceptor protein]-L-lysine = [E2 ubiquitin-conjugating enzyme]-L-cysteine + N(6)-ubiquitinyl-[acceptor protein]-L-lysine.. The protein operates within protein modification; protein ubiquitination. Functionally, E3 ubiquitin-protein ligase able to catalyze polyubiquitination with ubiquitin-conjugating enzyme E2 UBC8 in vitro. May be involved in the early steps of the plant defense signaling pathway. This is E3 ubiquitin-protein ligase ATL9 (ATL9) from Arabidopsis thaliana (Mouse-ear cress).